The primary structure comprises 503 residues: 2-isopropylmalate synthase (503 aa).

In terms of domain architecture, Pyruvate carboxyltransferase spans 4–264 (LYIFDTTLRD…EVSIKTEEIY (261 aa)). Positions 13, 201, 203, and 237 each coordinate Mn(2+). The tract at residues 388-503 (KLRHLQVVSG…NQLVMLKGKD (116 aa)) is regulatory domain.

This sequence belongs to the alpha-IPM synthase/homocitrate synthase family. LeuA type 1 subfamily. In terms of assembly, homodimer. Mn(2+) is required as a cofactor.

The protein resides in the cytoplasm. It catalyses the reaction 3-methyl-2-oxobutanoate + acetyl-CoA + H2O = (2S)-2-isopropylmalate + CoA + H(+). Its pathway is amino-acid biosynthesis; L-leucine biosynthesis; L-leucine from 3-methyl-2-oxobutanoate: step 1/4. Its function is as follows. Catalyzes the condensation of the acetyl group of acetyl-CoA with 3-methyl-2-oxobutanoate (2-ketoisovalerate) to form 3-carboxy-3-hydroxy-4-methylpentanoate (2-isopropylmalate). In Dictyoglomus turgidum (strain DSM 6724 / Z-1310), this protein is 2-isopropylmalate synthase.